The primary structure comprises 207 residues: Ribosomal RNA small subunit methyltransferase G (207 aa).

Residues Gly73, Leu78, 124–125, and Arg139 contribute to the S-adenosyl-L-methionine site; that span reads VE.

It belongs to the methyltransferase superfamily. RNA methyltransferase RsmG family.

The protein localises to the cytoplasm. The enzyme catalyses guanosine(527) in 16S rRNA + S-adenosyl-L-methionine = N(7)-methylguanosine(527) in 16S rRNA + S-adenosyl-L-homocysteine. Specifically methylates the N7 position of guanine in position 527 of 16S rRNA. The protein is Ribosomal RNA small subunit methyltransferase G of Salmonella arizonae (strain ATCC BAA-731 / CDC346-86 / RSK2980).